Reading from the N-terminus, the 439-residue chain is Xylose isomerase (439 aa).

Catalysis depends on residues His101 and Asp104. Residues Glu232, Glu268, His271, Asp296, Asp307, Asp309, and Asp339 each coordinate Mg(2+).

This sequence belongs to the xylose isomerase family. In terms of assembly, homotetramer. Mg(2+) is required as a cofactor.

Its subcellular location is the cytoplasm. It carries out the reaction alpha-D-xylose = alpha-D-xylulofuranose. This chain is Xylose isomerase, found in Yersinia pestis bv. Antiqua (strain Angola).